Reading from the N-terminus, the 356-residue chain is Alpha-N-acetylneuraminide alpha-2,8-sialyltransferase (356 aa).

At 1-29 the chain is on the cytoplasmic side; that stretch reads MSPCGRARRQTSRGAMAVLAWKFPRTRLP. The chain crosses the membrane as a helical; Signal-anchor for type II membrane protein span at residues 30 to 48; that stretch reads MGASALCVVVLCWLYIFPV. The Lumenal portion of the chain corresponds to 49-356; it reads YRLPNEKEIV…CEDTSLQPTS (308 aa). 2 N-linked (GlcNAc...) asparagine glycosylation sites follow: Asn71 and Asn119. Disulfide bonds link Cys138–Cys287 and Cys152–Cys347. Residues Asn143 and Asn166 each contribute to the CMP-N-acetyl-beta-neuraminate site. N-linked (GlcNAc...) asparagine glycans are attached at residues Asn214 and Asn245. The CMP-N-acetyl-beta-neuraminate site is built by Ser274, Thr275, Gly276, Trp296, and His310. His322 acts as the Proton donor/acceptor in catalysis.

The protein belongs to the glycosyltransferase 29 family. As to expression, strongly expressed in melanoma cell lines, adult and fetal brain and to a lesser extent in adult and fetal lung.

Its subcellular location is the golgi apparatus membrane. It carries out the reaction an N-acetyl-alpha-neuraminyl-(2-&gt;3)-beta-D-galactosyl derivative + CMP-N-acetyl-beta-neuraminate = an N-acetyl-alpha-neuraminyl-(2-&gt;8)-N-acetyl-alpha-neuraminyl-(2-&gt;3)-beta-D-galactosyl derivative + CMP + H(+). The catalysed reaction is a ganglioside GM3 (d18:1(4E)) + CMP-N-acetyl-beta-neuraminate = a ganglioside GD3 (d18:1(4E)) + CMP + H(+). The enzyme catalyses a ganglioside GD3 (d18:1(4E)) + CMP-N-acetyl-beta-neuraminate = a ganglioside GT3 (d18:1(4E)) + CMP + H(+). It catalyses the reaction a ganglioside GD1a (d18:1(4E)) + CMP-N-acetyl-beta-neuraminate = a ganglioside GT1a (d18:1(4E)) + CMP + H(+). It carries out the reaction a ganglioside GT1b (d18:1(4E)) + CMP-N-acetyl-beta-neuraminate = a ganglioside GQ1b (d18:1(4E)) + CMP + H(+). The catalysed reaction is a ganglioside GM1b (d18:1(4E)) + CMP-N-acetyl-beta-neuraminate = a ganglioside GD1c (d18:1(4E)) + CMP + H(+). The enzyme catalyses a ganglioside GD3 + CMP-N-acetyl-beta-neuraminate = a ganglioside GT3 + CMP + H(+). It catalyses the reaction [alpha-N-acetylneuraminyl-(2-&gt;8)](n)-alpha-N-acetylneuraminyl-(2-&gt;8)-alpha-N-acetylneuraminyl-(2-&gt;3)-beta-D-galactosyl-(1-&gt;4)-beta-D-glucosyl-(1&lt;-&gt;1)-ceramide + CMP-N-acetyl-beta-neuraminate = [alpha-N-acetylneuraminyl-(2-&gt;8)](n+1)-alpha-N-acetylneuraminyl-(2-&gt;8)-alpha-N-acetylneuraminyl-(2-&gt;3)-beta-D-galactosyl-(1-&gt;4)-beta-D-glucosyl-(1&lt;-&gt;1)-ceramide + CMP + H(+). Its pathway is protein modification; protein glycosylation. It participates in lipid metabolism; sphingolipid metabolism. In terms of biological role, catalyzes the addition of sialic acid in alpha 2,8-linkage to the sialic acid moiety of the ganglioside GM3 to form ganglioside GD3; gangliosides are a subfamily of complex glycosphingolipds that contain one or more residues of sialic acid. Can catalyze the addition of a second alpha-2,8-sialic acid to GD3 to form GT3. Can use GM1b, GD1a and GT1b as acceptor substrates to synthesize GD1c, GT1a and GQ1b respectively. Can synthesize unusual tetra- and pentasialylated lactosylceramide derivatives identified as GQ3 (II3Neu5Ac4-Gg2Cer) and GP3 (II3Neu5Ac5-Gg2Cer) in breast cancer cells. This chain is Alpha-N-acetylneuraminide alpha-2,8-sialyltransferase, found in Homo sapiens (Human).